We begin with the raw amino-acid sequence, 323 residues long: uncharacterized protein (323 aa).

The next 2 helical transmembrane spans lie at 232 to 252 (LASY…FIVL) and 267 to 287 (SLIV…GVIG).

The protein belongs to the glycosyltransferase 2 family. GtrB subfamily.

The protein resides in the cell membrane. This is an uncharacterized protein from Bacillus subtilis (strain 168).